Reading from the N-terminus, the 240-residue chain is uncharacterized protein (240 aa).

Residues 1 to 30 (MNKSGMSLIITMLLLIGTAIVIGAAYYAWS) form the signal peptide.

This is an uncharacterized protein from Methanocaldococcus jannaschii (strain ATCC 43067 / DSM 2661 / JAL-1 / JCM 10045 / NBRC 100440) (Methanococcus jannaschii).